The sequence spans 968 residues: MQPKVPLGSRKQKPCSDMGDVQRAARSRGSLSAHMLLLLLASITMLLCARGAHGRPTEEDEELVLPSLERAPGHDSTTTRLRLDAFGQQLHLKLQPDSGFLAPGFTLQTVGRSPGSEAQHLDPTGDLAHCFYSGTVNGDPGSAAALSLCEGVRGAFYLQGEEFFIQPAPGVATERLAPAVPEEESSARPQFHILRRRRRGSGGAKCGVMDDETLPTSDSRPESQNTRNQWPVRDPTPQDAGKPSGPGSIRKKRFVSSPRYVETMLVADQSMADFHGSGLKHYLLTLFSVAARFYKHPSIRNSISLVVVKILVIYEEQKGPEVTSNAALTLRNFCSWQKQHNSPSDRDPEHYDTAILFTRQDLCGSHTCDTLGMADVGTVCDPSRSCSVIEDDGLQAAFTTAHELGHVFNMPHDDAKHCASLNGVSGDSHLMASMLSSLDHSQPWSPCSAYMVTSFLDNGHGECLMDKPQNPIKLPSDLPGTLYDANRQCQFTFGEESKHCPDAASTCTTLWCTGTSGGLLVCQTKHFPWADGTSCGEGKWCVSGKCVNKTDMKHFATPVHGSWGPWGPWGDCSRTCGGGVQYTMRECDNPVPKNGGKYCEGKRVRYRSCNIEDCPDNNGKTFREEQCEAHNEFSKASFGNEPTVEWTPKYAGVSPKDRCKLTCEAKGIGYFFVLQPKVVDGTPCSPDSTSVCVQGQCVKAGCDRIIDSKKKFDKCGVCGGNGSTCKKMSGIVTSTRPGYHDIVTIPAGATNIEVKHRNQRGSRNNGSFLAIRAADGTYILNGNFTLSTLEQDLTYKGTVLRYSGSSAALERIRSFSPLKEPLTIQVLMVGHALRPKIKFTYFMKKKTESFNAIPTFSEWVIEEWGECSKTCGSGWQRRVVQCRDINGHPASECAKEVKPASTRPCADLPCPHWQVGDWSPCSKTCGKGYKKRTLKCVSHDGGVLSNESCDPLKKPKHYIDFCTLTQCS.

Disordered stretches follow at residues 1–23 and 177–253; these read MQPK…DVQR and APAV…RKKR. A signal peptide spans 1–48; it reads MQPKVPLGSRKQKPCSDMGDVQRAARSRGSLSAHMLLLLLASITMLLC. The propeptide occupies 49-253; that stretch reads ARGAHGRPTE…SGPGSIRKKR (205 aa). Positions 204 to 211 match the Cysteine switch motif; sequence AKCGVMDD. Residue Cys206 coordinates Zn(2+). The span at 214–229 shows a compositional bias: polar residues; the sequence is LPTSDSRPESQNTRNQ. The Peptidase M12B domain maps to 259–468; that stretch reads RYVETMLVAD…GHGECLMDKP (210 aa). The Ca(2+) site is built by Glu262, Asp345, and Asp352. Cystine bridges form between Cys334–Cys386, Cys363–Cys368, Cys380–Cys463, and Cys418–Cys447. His402 is a Zn(2+) binding site. Glu403 is an active-site residue. Zn(2+) is bound by residues His406 and His412. Residues Cys463 and Asp466 each coordinate Ca(2+). The region spanning 477 to 559 is the Disintegrin domain; that stretch reads DLPGTLYDAN…TDMKHFATPV (83 aa). Intrachain disulfides connect Cys489/Cys512, Cys500/Cys522, Cys507/Cys541, and Cys535/Cys546. N-linked (GlcNAc...) asparagine glycosylation occurs at Asn548. Positions 560-615 constitute a TSP type-1 1 domain; it reads HGSWGPWGPWGDCSRTCGGGVQYTMRECDNPVPKNGGKYCEGKRVRYRSCNIEDCP. Cystine bridges form between Cys572–Cys609, Cys576–Cys614, and Cys587–Cys599. N-linked (GlcNAc...) asparagine glycosylation is found at Asn721, Asn765, and Asn783. A spacer region spans residues 726–850; that stretch reads KKMSGIVTST…YFMKKKTESF (125 aa). 2 TSP type-1 domains span residues 855 to 911 and 912 to 968; these read TFSE…LPCP and HWQV…TQCS. Asn946 carries N-linked (GlcNAc...) asparagine glycosylation.

It depends on Zn(2+) as a cofactor. In terms of processing, the precursor is cleaved by a furin endopeptidase. Glycosylated. Can be O-fucosylated by POFUT2 on a serine or a threonine residue found within the consensus sequence C1-X(2)-(S/T)-C2-G of the TSP type-1 repeat domains where C1 and C2 are the first and second cysteine residue of the repeat, respectively. Fucosylated repeats can then be further glycosylated by the addition of a beta-1,3-glucose residue by the glucosyltransferase, B3GALTL. Fucosylation mediates the efficient secretion of ADAMTS family members. Can also be C-glycosylated with one or two mannose molecules on tryptophan residues within the consensus sequence W-X-X-W of the TPRs, and N-glycosylated. These other glycosylations can also facilitate secretion.

It is found in the secreted. The protein localises to the extracellular space. The protein resides in the extracellular matrix. In terms of biological role, metalloprotease which cleaves aggrecan, a cartilage proteoglycan, at the '1691-Glu-|-Leu-1692' site (within the chondroitin sulfate attachment domain), and may be involved in its turnover. Also cleaves COMP. Has angiogenic inhibitor activity. May play a critical role in follicular rupture. In Mus musculus (Mouse), this protein is A disintegrin and metalloproteinase with thrombospondin motifs 1 (Adamts1).